A 134-amino-acid chain; its full sequence is Small ribosomal subunit protein uS8 (134 aa).

Belongs to the universal ribosomal protein uS8 family. In terms of assembly, part of the 30S ribosomal subunit. Contacts proteins S5 and S12.

Its function is as follows. One of the primary rRNA binding proteins, it binds directly to 16S rRNA central domain where it helps coordinate assembly of the platform of the 30S subunit. The chain is Small ribosomal subunit protein uS8 from Kosmotoga olearia (strain ATCC BAA-1733 / DSM 21960 / TBF 19.5.1).